Consider the following 182-residue polypeptide: CASP-like protein 5A1 (182 aa).

The Cytoplasmic portion of the chain corresponds to 1–47; the sequence is MEMASHPAVHPVALPPPYQAVGPPAPPAVRINDFPGSPGTLMGLALR. Residues 48–68 form a helical membrane-spanning segment; that stretch reads FAQLGFALTALCIMVSIVGFS. Over 69 to 72 the chain is Extracellular; the sequence is SVTA. A helical transmembrane segment spans residues 73–93; sequence FCFLVAAMVLQCIWSLCLGVL. The Cytoplasmic segment spans residues 94–117; that stretch reads DCYALLTKRSLRNSLILSFFVVGD. The helical transmembrane segment at 118–138 threads the bilayer; it reads WITSTMTFAGACAAAGITVLI. At 139 to 158 the chain is on the extracellular side; it reads DNDLNQCGPNHCNRFEAAAA. A helical transmembrane segment spans residues 159–179; that stretch reads MAFMSWVITTISFFLSFWILV. Residues 180–182 lie on the Cytoplasmic side of the membrane; the sequence is TCR.

The protein belongs to the Casparian strip membrane proteins (CASP) family. In terms of assembly, homodimer and heterodimers.

The protein localises to the cell membrane. The chain is CASP-like protein 5A1 from Physcomitrium patens (Spreading-leaved earth moss).